The chain runs to 314 residues: tRNA dimethylallyltransferase (314 aa).

9 to 16 contacts ATP; the sequence is GPTAVGKT. 11–16 provides a ligand contact to substrate; the sequence is TAVGKT. An interaction with substrate tRNA region spans residues 34–37; that stretch reads DSMQ.

Belongs to the IPP transferase family. In terms of assembly, monomer. Requires Mg(2+) as cofactor.

It catalyses the reaction adenosine(37) in tRNA + dimethylallyl diphosphate = N(6)-dimethylallyladenosine(37) in tRNA + diphosphate. Functionally, catalyzes the transfer of a dimethylallyl group onto the adenine at position 37 in tRNAs that read codons beginning with uridine, leading to the formation of N6-(dimethylallyl)adenosine (i(6)A). The polypeptide is tRNA dimethylallyltransferase (Clostridium tetani (strain Massachusetts / E88)).